Consider the following 177-residue polypeptide: ATP synthase subunit delta (177 aa).

This sequence belongs to the ATPase delta chain family. In terms of assembly, F-type ATPases have 2 components, F(1) - the catalytic core - and F(0) - the membrane proton channel. F(1) has five subunits: alpha(3), beta(3), gamma(1), delta(1), epsilon(1). F(0) has three main subunits: a(1), b(2) and c(10-14). The alpha and beta chains form an alternating ring which encloses part of the gamma chain. F(1) is attached to F(0) by a central stalk formed by the gamma and epsilon chains, while a peripheral stalk is formed by the delta and b chains.

The protein localises to the cell inner membrane. In terms of biological role, f(1)F(0) ATP synthase produces ATP from ADP in the presence of a proton or sodium gradient. F-type ATPases consist of two structural domains, F(1) containing the extramembraneous catalytic core and F(0) containing the membrane proton channel, linked together by a central stalk and a peripheral stalk. During catalysis, ATP synthesis in the catalytic domain of F(1) is coupled via a rotary mechanism of the central stalk subunits to proton translocation. This protein is part of the stalk that links CF(0) to CF(1). It either transmits conformational changes from CF(0) to CF(1) or is implicated in proton conduction. The protein is ATP synthase subunit delta of Vibrio parahaemolyticus serotype O3:K6 (strain RIMD 2210633).